Consider the following 654-residue polypeptide: MNQPQRMAPVGTDKELSDLLDFSMMFPLPVTNGKGRPASLAGAQFGGSGLEDRPSSGSWGSGDQSSSSFDPSRTFSEGTHFTESHSSLSSSTFLGPGLGGKSGERGAYASFGRDAGVGGLTQAGFLSGELALNSPGPLSPSGMKGTSQYYPSYSGSSRRRAADGSLDTQPKKVRKVPPGLPSSVYPPSSGEDYGRDATAYPSAKTPSSTYPAPFYVADGSLHPSAELWSPPGQAGFGPMLGGGSSPLPLPPGSGPVGSSGSSSTFGGLHQHERMGYQLHGAEVNGGLPSASSFSSAPGATYGGVSSHTPPVSGADSLLGSRGTTAGSSGDALGKALASIYSPDHSSNNFSSSPSTPVGSPQGLAGTSQWPRAGAPGALSPSYDGGLHGLQSKIEDHLDEAIHVLRSHAVGTAGDMHTLLPGHGALASGFTGPMSLGGRHAGLVGGSHPEDGLAGSTSLMHNHAALPSQPGTLPDLSRPPDSYSGLGRAGATAAASEIKREEKEDEENTSAADHSEEEKKELKAPRARTSPDEDEDDLLPPEQKAEREKERRVANNARERLRVRDINEAFKELGRMCQLHLNSEKPQTKLLILHQAVSVILNLEQQVRERNLNPKAACLKRREEEKVSGVVGDPQMVLSAPHPGLSEAHNPAGHM.

A 9aaTAD motif is present at residues 19–27 (LLDFSMMFP). A disordered region spans residues 31–103 (TNGKGRPASL…LGPGLGGKSG (73 aa)). Over residues 55 to 68 (SSGSWGSGDQSSSS) the composition is skewed to low complexity. Residues 69 to 79 (FDPSRTFSEGT) show a composition bias toward polar residues. Positions 84–94 (SHSSLSSSTFL) are enriched in low complexity. Phosphoserine occurs at positions 134 and 139. Disordered regions lie at residues 135–205 (PGPL…SAKT), 239–268 (MLGG…FGGL), 292–329 (SFSS…GSSG), and 343–385 (DHSS…YDGG). Low complexity predominate over residues 147–156 (SQYYPSYSGS). The Nuclear localization signal signature appears at 170-176 (PKKVRKV). The span at 256–268 (VGSSGSSSTFGGL) shows a compositional bias: low complexity. A compositionally biased stretch (low complexity) spans 343–354 (DHSSNNFSSSPS). The residue at position 355 (Thr355) is a Phosphothreonine. At Ser359 the chain carries Phosphoserine. Omega-N-methylarginine is present on Arg371. Ser379 is modified (phosphoserine). Residues 389–425 (LQSKIEDHLDEAIHVLRSHAVGTAGDMHTLLPGHGAL) form a leucine-zipper region. Residues 461 to 552 (NHAALPSQPG…KAEREKERRV (92 aa)) are disordered. Lys498 is covalently cross-linked (Glycyl lysine isopeptide (Lys-Gly) (interchain with G-Cter in SUMO2)). Over residues 512–523 (DHSEEEKKELKA) the composition is skewed to basic and acidic residues. At Ser529 the chain carries Phosphoserine. Asp531 carries the post-translational modification Phosphothreonine. Residues 542 to 552 (QKAEREKERRV) are compositionally biased toward basic and acidic residues. In terms of domain architecture, bHLH spans 549–602 (ERRVANNARERLRVRDINEAFKELGRMCQLHLNSEKPQTKLLILHQAVSVILNL). A Glycyl lysine isopeptide (Lys-Gly) (interchain with G-Cter in SUMO2) cross-link involves residue Lys625. The tract at residues 633–654 (PQMVLSAPHPGLSEAHNPAGHM) is disordered.

As to quaternary structure, homodimer. Heterodimer; efficient DNA binding requires dimerization with another bHLH protein. Forms a heterodimer with ASH1, TWIST1 and TWIST2. Forms a heterodimer with MYOG; heterodimerization enhances MYOG DNA-binding and transcriptional activities. Forms a heterodimer with NEUROD1; the heterodimer is inhibited in presence of ID2, but not NR0B2, to E-box element. Forms a heterodimer with TCF15; the heterodimer binds E-box element. Forms a heterodimer with ATOH8; repress transcription of TCF3 and TCF3/NEUROG3 dimer-induced transactivation of E box-dependent promoters. Component of a nuclear TAL-1 complex composed at least of CBFA2T3, LDB1, TAL1 and TCF3. Interacts with NEUROD2, PTF1A and TGFB1I1. Interacts with EP300 and UBE2I. Interacts with BHLHA9. Interacts with ASB2; the interaction is mediated by SKP2 and targets TCF3 for Notch-induced proteasomal degradation. In terms of assembly, forms a heterodimer with ATOH7; required for ATOH7 DNA-binding. Interacts with RALGAPA1 and FIGLA. Post-translationally, phosphorylated following NGF stimulation. Undergoes Notch-induced ubiquitination and subsequent proteasomal degradation which is mediated by ASB1 or ASB2, the substrate-recognition components of probable ECS E3 ubiquitin-protein ligase complexes.

Its subcellular location is the nucleus. Functionally, transcriptional regulator involved in the initiation of neuronal differentiation and mesenchymal to epithelial transition. Heterodimers between TCF3 and tissue-specific basic helix-loop-helix (bHLH) proteins play major roles in determining tissue-specific cell fate during embryogenesis, like muscle or early B-cell differentiation. Together with TCF15, required for the mesenchymal to epithelial transition. Dimers bind DNA on E-box motifs: 5'-CANNTG-3'. Binds to the kappa-E2 site in the kappa immunoglobulin gene enhancer. Binds to IEB1 and IEB2, which are short DNA sequences in the insulin gene transcription control region. In terms of biological role, facilitates ATOH7 binding to DNA at the consensus sequence 5'-CAGGTG-3', and positively regulates transcriptional activity. This is Transcription factor E2-alpha (TCF3) from Homo sapiens (Human).